A 366-amino-acid chain; its full sequence is Histone-lysine N-methyltransferase SETD7 (366 aa).

MORN repeat units follow at residues 36–58 (FEGH…DGST), 59–81 (LEGF…DGGS), and 106–128 (FKGQ…DGGS). The 123-residue stretch at 214–336 (ERVYVNDSLI…KDEELTVAYG (123 aa)) folds into the SET domain. Residues 226 to 228 (AGE), N296, and H297 contribute to the S-adenosyl-L-methionine site.

Belongs to the class V-like SAM-binding methyltransferase superfamily. Histone-lysine methyltransferase family. SET7 subfamily.

The protein localises to the nucleus. Its subcellular location is the chromosome. The enzyme catalyses L-lysyl(4)-[histone H3] + S-adenosyl-L-methionine = N(6)-methyl-L-lysyl(4)-[histone H3] + S-adenosyl-L-homocysteine + H(+). The catalysed reaction is L-lysyl-[protein] + S-adenosyl-L-methionine = N(6)-methyl-L-lysyl-[protein] + S-adenosyl-L-homocysteine + H(+). Its function is as follows. Histone methyltransferase that specifically monomethylates 'Lys-4' of histone H3. H3 'Lys-4' methylation represents a specific tag for epigenetic transcriptional activation. Plays a central role in the transcriptional activation of genes. Also has methyltransferase activity toward non-histone proteins. In Xenopus tropicalis (Western clawed frog), this protein is Histone-lysine N-methyltransferase SETD7 (setd7).